The primary structure comprises 179 residues: Inner membrane-spanning protein YciB (179 aa).

6 helical membrane passes run 3–23 (FLFD…ADIY), 24–44 (TATA…WFRH), 49–69 (PMQW…LVLH), 76–96 (WKPT…VLVW), 121–141 (LAWA…AYQF), and 149–169 (FKLF…SVWL).

Belongs to the YciB family.

Its subcellular location is the cell inner membrane. Its function is as follows. Plays a role in cell envelope biogenesis, maintenance of cell envelope integrity and membrane homeostasis. This is Inner membrane-spanning protein YciB from Cupriavidus taiwanensis (strain DSM 17343 / BCRC 17206 / CCUG 44338 / CIP 107171 / LMG 19424 / R1) (Ralstonia taiwanensis (strain LMG 19424)).